Here is a 439-residue protein sequence, read N- to C-terminus: Cysteine desulfurase-like protein ustD (439 aa).

A disordered region spans residues 1-25; that stretch reads MKSVATSSLDDVDKDSVPLGSSING. Pyridoxal 5'-phosphate contacts are provided by residues 120–121, asparagine 206, and 255–257; these read TT and SWY. Lysine 258 bears the N6-(pyridoxal phosphate)lysine mark.

This sequence belongs to the class-V pyridoxal-phosphate-dependent aminotransferase family. Requires pyridoxal 5'-phosphate as cofactor.

It participates in mycotoxin biosynthesis. Functionally, cysteine desulfurase-like protein; part of the gene cluster that mediates the biosynthesis of the secondary metabolite ustiloxin B, an antimitotic tetrapeptide. First, ustA is processed by the subtilisin-like endoprotease Kex2 that is outside the ustiloxin B gene cluster, at the C-terminal side of Arg-Lys, after transfer to Golgi apparatus through the endoplasmic reticulum (ER). Cleavage by KEX2 generates 16 peptides YAIG-I to YAIG-XVI. To process the precursor peptide further, at least two peptidases are necessary to cleave the N-terminal and C-terminal sides of the Tyr-Ala-Ile-Gly core peptide which serves as backbone for the synthesis of ustiloxin B, through cyclization and modification of the tyrosine with a non-protein coding amino acid, norvaline. One of the two peptidases must be the serine peptidase ustP; and the other pepdidase is probably ustH. Macrocyclization of the core peptide derived from ustA requires the tyrosinase ustQ, as well as the homologous oxidases ustYa and ustYb, and leads to the production of the first cyclization product N-desmethylustiloxin F. For the formation of N-desmethylustiloxin F, three oxidation steps are required, hydroxylation at the benzylic position, hydroxylation at either the aromatic ring of Tyr or beta-position of Ile, and oxidative cyclization. UstQ may catalyze the oxidation of a phenol moiety, whereas the ustYa and ustYb are most likely responsible for the remaining two-step oxidations. N-desmethylustiloxin F is then methylated by ustM to yield ustiloxin F which in turn substrate of the cytochrome P450 monooxygenase ustC which catalyzes the formation of S-deoxyustiloxin H. The flavoprotein monooxygenases ustF1 and ustF2 then participate in the modification of the side chain of S-deoxyustiloxin H, leading to the synthesis of an oxime intermediate, via ustiloxin H. Finally, carboxylative dehydration performed by the cysteine desulfurase-like protein ustD yields ustiloxin B. The protein is Cysteine desulfurase-like protein ustD of Aspergillus flavus (strain ATCC 200026 / FGSC A1120 / IAM 13836 / NRRL 3357 / JCM 12722 / SRRC 167).